A 359-amino-acid polypeptide reads, in one-letter code: UbiA prenyltransferase domain-containing protein 1 homolog (359 aa).

Over residues 1–16 (MATSSQLLPNGNLSRN) the composition is skewed to polar residues. The interval 1–23 (MATSSQLLPNGNLSRNGKTKTED) is disordered. Helical transmembrane passes span 67–89 (ALRP…LAYR), 98–118 (LATF…GNVV), 148–168 (VVSL…LLAV), 177–197 (LALI…GIGF), 200–220 (IALG…LFAF), 262–284 (IVTL…LLFA), 289–311 (FFIF…PQAF), and 335–355 (FFFG…PTFG).

It belongs to the UbiA prenyltransferase family.

Its subcellular location is the mitochondrion membrane. It functions in the pathway quinol/quinone metabolism; menaquinone biosynthesis. Functionally, prenyltransferase that mediates the formation of menaquinone-4 (MK-4), a vitamin K2 isoform, thereby acting as a mitochondrial electron carrier. Mediates the conversion of phylloquinone (PK) into MK-4, probably by cleaving the side chain of phylloquinone (PK) to release 2-methyl-1,4-naphthoquinone (menadione; K3) and then prenylating it with geranylgeranyl pyrophosphate (GGPP) to form MK-4. MK-4 acts as a membrane electron carrier downstream of a electron transport chain complex, improving mitochondrial oxygen consumption. This Drosophila melanogaster (Fruit fly) protein is UbiA prenyltransferase domain-containing protein 1 homolog (heix).